A 90-amino-acid chain; its full sequence is Cell division topological specificity factor 2 (90 aa).

Belongs to the MinE family.

Prevents the cell division inhibition by proteins MinC and MinD at internal division sites while permitting inhibition at polar sites. This ensures cell division at the proper site by restricting the formation of a division septum at the midpoint of the long axis of the cell. In Syntrophomonas wolfei subsp. wolfei (strain DSM 2245B / Goettingen), this protein is Cell division topological specificity factor 2.